The chain runs to 661 residues: NUAK family SNF1-like kinase 1 (661 aa).

An N-acetylmethionine modification is found at methionine 1. The interval 1–24 (MEGAAAPVAGDRPDLGLGAPGSPR) is disordered. The residue at position 22 (serine 22) is a Phosphoserine. One can recognise a Protein kinase domain in the interval 55–306 (YELQETLGKG…IEDIANHWWV (252 aa)). Residues 61–69 (LGKGTYGKV) and lysine 84 contribute to the ATP site. Aspartate 178 (proton acceptor) is an active-site residue. Threonine 211 carries the post-translational modification Phosphothreonine; by LKB1. 2 disordered regions span residues 345–421 (TEAK…EGVV) and 442–570 (LPSS…RPSS). Positions 393–404 (SSKRPKGILKKR) are enriched in basic residues. The GILK motif motif lies at 399–402 (GILK). The residue at position 455 (serine 455) is a Phosphoserine. Over residues 518 to 529 (SCRRKGILKHSS) the composition is skewed to basic residues. The residue at position 600 (serine 600) is a Phosphoserine; by PKB/AKT1.

This sequence belongs to the protein kinase superfamily. CAMK Ser/Thr protein kinase family. SNF1 subfamily. In terms of assembly, interacts (via GILK motif) with PPP1CB; the interaction is direct and bridges NUAK1 and PPP1R12A. Interacts with CDKN1A. Mg(2+) is required as a cofactor. Post-translationally, ubiquitinated with 'Lys-29'- and 'Lys-33'-linked polyubiquitins which appear to impede LKB1-mediated phosphorylation. Deubiquitinated by USP9X. Phosphorylated at Thr-211 by STK11/LKB1 in complex with STE20-related adapter-alpha (STRADA) pseudo kinase and CAB39. Not dephosphorylated by the myosin PP1 complex when regulating its activity, due to the presence of PPP1R12A, which prevents myosin PP1 from dephosphorylating NUAK1. Phosphorylated by STK38L upon stimulation with IGF1. In terms of tissue distribution, expressed at high levels in heart and brain, and at lower levels in skeletal muscle, kidney, ovary, placenta, lung and liver. Highly up-regulated in colorectal cancer cell lines.

The protein resides in the nucleus. The protein localises to the cytoplasm. The catalysed reaction is L-seryl-[protein] + ATP = O-phospho-L-seryl-[protein] + ADP + H(+). It carries out the reaction L-threonyl-[protein] + ATP = O-phospho-L-threonyl-[protein] + ADP + H(+). Activated by phosphorylation on Thr-211. Activated by phosphorylation at Ser-600 AKT1 during glucose starvation; the relevance of such activation in normal cells is however unsure. Functionally, serine/threonine-protein kinase involved in various processes such as cell adhesion, regulation of cell ploidy and senescence, cell proliferation and tumor progression. Phosphorylates ATM, CASP6, LATS1, PPP1R12A and p53/TP53. Acts as a regulator of cellular senescence and cellular ploidy by mediating phosphorylation of 'Ser-464' of LATS1, thereby controlling its stability. Controls cell adhesion by regulating activity of the myosin protein phosphatase 1 (PP1) complex. Acts by mediating phosphorylation of PPP1R12A subunit of myosin PP1: phosphorylated PPP1R12A then interacts with 14-3-3, leading to reduced dephosphorylation of myosin MLC2 by myosin PP1. May be involved in DNA damage response: phosphorylates p53/TP53 at 'Ser-15' and 'Ser-392' and is recruited to the CDKN1A/WAF1 promoter to participate in transcription activation by p53/TP53. May also act as a tumor malignancy-associated factor by promoting tumor invasion and metastasis under regulation and phosphorylation by AKT1. Suppresses Fas-induced apoptosis by mediating phosphorylation of CASP6, thereby suppressing the activation of the caspase and the subsequent cleavage of CFLAR. Regulates UV radiation-induced DNA damage response mediated by CDKN1A. In association with STK11, phosphorylates CDKN1A in response to UV radiation and contributes to its degradation which is necessary for optimal DNA repair. In Homo sapiens (Human), this protein is NUAK family SNF1-like kinase 1 (NUAK1).